Here is a 327-residue protein sequence, read N- to C-terminus: Inactive peptidyl-prolyl cis-trans isomerase FKBP6 (327 aa).

One can recognise a PPIase FKBP-type domain in the interval 54–143; that stretch reads DASVLVKYSG…LFEIELIDFL (90 aa). TPR repeat units lie at residues 171 to 204, 219 to 252, and 253 to 286; these read AATE…LHRR, LLVL…DKRN, and AKAL…QPCN.

The protein belongs to the FKBP6 family. In terms of assembly, interacts with HSP72/HSPA2 and CLTC. Interacts with GAPDH; leading to inhibit GAPDH catalytic activity. Interacts (via TPR repeats) with HSP90. In terms of tissue distribution, testis-specific.

It localises to the cytoplasm. The protein resides in the cytosol. Its subcellular location is the nucleus. It is found in the chromosome. Co-chaperone required during spermatogenesis to repress transposable elements and prevent their mobilization, which is essential for the germline integrity. Acts via the piRNA metabolic process, which mediates the repression of transposable elements during meiosis by forming complexes composed of piRNAs and Piwi proteins and govern the methylation and subsequent repression of transposons. Acts as a co-chaperone via its interaction with HSP90 and is required for the piRNA amplification process, the secondary piRNA biogenesis. May be required together with HSP90 in removal of 16 nucleotide ping-pong by-products from Piwi complexes, possibly facilitating turnover of Piwi complexes. The sequence is that of Inactive peptidyl-prolyl cis-trans isomerase FKBP6 (Fkbp6) from Mus musculus (Mouse).